The chain runs to 286 residues: Pyridoxal kinase PdxY (286 aa).

Residue Ser8 coordinates substrate. 2 residues coordinate ATP: Asp110 and Glu147. Asp223 is a substrate binding site.

This sequence belongs to the pyridoxine kinase family. PdxY subfamily. As to quaternary structure, homodimer. Mg(2+) is required as a cofactor.

The enzyme catalyses pyridoxal + ATP = pyridoxal 5'-phosphate + ADP + H(+). The protein operates within cofactor metabolism; pyridoxal 5'-phosphate salvage; pyridoxal 5'-phosphate from pyridoxal: step 1/1. Pyridoxal kinase involved in the salvage pathway of pyridoxal 5'-phosphate (PLP). Catalyzes the phosphorylation of pyridoxal to PLP. This Granulibacter bethesdensis (strain ATCC BAA-1260 / CGDNIH1) protein is Pyridoxal kinase PdxY.